A 120-amino-acid chain; its full sequence is Aspartate 1-decarboxylase (120 aa).

The Schiff-base intermediate with substrate; via pyruvic acid role is filled by serine 25. Serine 25 bears the Pyruvic acid (Ser) mark. Threonine 57 contributes to the substrate binding site. The active-site Proton donor is tyrosine 58. Substrate is bound at residue 73–75 (GAA).

This sequence belongs to the PanD family. In terms of assembly, heterooctamer of four alpha and four beta subunits. Requires pyruvate as cofactor. Is synthesized initially as an inactive proenzyme, which is activated by self-cleavage at a specific serine bond to produce a beta-subunit with a hydroxyl group at its C-terminus and an alpha-subunit with a pyruvoyl group at its N-terminus.

The protein resides in the cytoplasm. It catalyses the reaction L-aspartate + H(+) = beta-alanine + CO2. It functions in the pathway cofactor biosynthesis; (R)-pantothenate biosynthesis; beta-alanine from L-aspartate: step 1/1. In terms of biological role, catalyzes the pyruvoyl-dependent decarboxylation of aspartate to produce beta-alanine. The polypeptide is Aspartate 1-decarboxylase (Deinococcus radiodurans (strain ATCC 13939 / DSM 20539 / JCM 16871 / CCUG 27074 / LMG 4051 / NBRC 15346 / NCIMB 9279 / VKM B-1422 / R1)).